The chain runs to 282 residues: MAHQLKLLKDDFFASDQQAVAVADRYPQDVFAEHTHDFCELVIVWRGNGLHVLNDRPYRITRGDLFYIHADDKHSYASVNDLVLQNIIYCPERLKLNLDWQGAIPGFNASAGQPHWRLGSVGMAQARQVIGQLEHESSQHVPFANEMAELLFGQLVMLLNRHRYTSDSLPPTSSETLLDKLITRLAASLKSPFALDKFCDEASCSERVLRQQFRQQTGMTINQYLRQVRVCHAQYLLQHSRLLISDISTECGFEDSNYFSVVFTRETGMTPSQWRHLNSQKD.

Positions 179–277 (DKLITRLAAS…GMTPSQWRHL (99 aa)) constitute an HTH araC/xylS-type domain. DNA-binding regions (H-T-H motif) lie at residues 196–217 (DKFC…RQQT) and 244–267 (ISDI…TRET).

As to quaternary structure, binds DNA as a dimer.

It is found in the cytoplasm. Functionally, activates expression of the rhaSR operon in response to L-rhamnose. The chain is HTH-type transcriptional activator RhaR from Escherichia coli O1:K1 / APEC.